The primary structure comprises 892 residues: Protein RRP6-like 3 (892 aa).

A 3'-5' exonuclease domain is found at 119 to 287 (YVWVETESQL…IADSLTTELK (169 aa)). In terms of domain architecture, HRDC spans 350–436 (SLNAEELVRK…CSHLDDIYKM (87 aa)). The segment at 785 to 811 (VDDSGDGTSEGDGAKELNDTQCNGNTL) is disordered.

Its subcellular location is the cytoplasm. The protein localises to the cytosol. The protein is Protein RRP6-like 3 of Arabidopsis thaliana (Mouse-ear cress).